An 879-amino-acid chain; its full sequence is Leucine--tRNA ligase (879 aa).

The 'HIGH' region motif lies at 45–55 (PYPSGALHMGH). The 'KMSKS' region motif lies at 637–641 (KMSKS). An ATP-binding site is contributed by lysine 640.

This sequence belongs to the class-I aminoacyl-tRNA synthetase family.

The protein localises to the cytoplasm. The enzyme catalyses tRNA(Leu) + L-leucine + ATP = L-leucyl-tRNA(Leu) + AMP + diphosphate. The protein is Leucine--tRNA ligase of Xylella fastidiosa (strain 9a5c).